The primary structure comprises 656 residues: Period circadian protein (656 aa).

A compositionally biased stretch (low complexity) spans 1-34 (KVSDSAYSNSCSNSQSQRSGSSKSRLSGSHSSGS). The tract at residues 1 to 161 (KVSDSAYSNS…AAQSFPIPSP (161 aa)) is disordered. Residues 53–66 (KRNKDKSRKKKKNK) carry the Nuclear localization signal motif. A compositionally biased stretch (basic residues) spans 53 to 66 (KRNKDKSRKKKKNK). Over residues 108–120 (ELQDQQHGEDHSE) the composition is skewed to basic and acidic residues. 2 consecutive PAS domains span residues 224-359 (DSFC…ATPI) and 377-483 (FAIR…RVFQ). The tract at residues 580-656 (TSIAGTGGTG…SSRGGSTAIP (77 aa)) is disordered. A run of 26 repeats spans residues 584-585 (GT), 587-588 (GT), 589-590 (GT), 591-592 (GT), 593-594 (GT), 595-596 (GT), 597-598 (GT), 599-600 (GT), 601-602 (GT), 603-604 (GT), 605-606 (GT), 607-608 (GT), 609-610 (GT), 611-612 (GT), 613-614 (GT), 615-616 (GT), 617-618 (GT), 619-620 (GT), 621-622 (GT), 623-624 (GT), 625-626 (GT), 627-628 (GT), 629-630 (GT), 631-632 (GT), 633-634 (GN), and 635-636 (GT). Positions 584 to 642 (GTGGTGTGTGTGTGTGTGTGTGTGTGTGTGTGTGTGTGTGTGTGTGTGTGNGTNSGTGT) are enriched in gly residues. Positions 584 to 644 (GTGGTGTGTG…GTNSGTGTGT (61 aa)) are 30 X 2 AA approximate tandem repeats of G-[TN]. Residues 637–638 (NS) form a 27; approximate repeat. Repeat copies occupy residues 639–640 (GT), 641–642 (GT), and 643–644 (GT). Over residues 643–656 (GTTSSSRGGSTAIP) the composition is skewed to low complexity.

As to quaternary structure, forms a heterodimer with timeless (TIM); the complex then translocates into the nucleus. Phosphorylated with a circadian rhythmicity, probably by the double-time protein (dbt). Phosphorylation could be implicated in the stability of per monomer and in the formation of heterodimer per-tim.

It is found in the nucleus. It localises to the cytoplasm. The protein localises to the perinuclear region. In terms of biological role, essential for biological clock functions. Determines the period length of circadian and ultradian rhythms; an increase in PER dosage leads to shortened circadian rhythms and a decrease leads to lengthened circadian rhythms. Essential for the circadian rhythmicity of locomotor activity, eclosion behavior, and for the rhythmic component of the male courtship song that originates in the thoracic nervous system. The biological cycle depends on the rhythmic formation and nuclear localization of the TIM-PER complex. Light induces the degradation of TIM, which promotes elimination of PER. Nuclear activity of the heterodimer coordinatively regulates PER and TIM transcription through a negative feedback loop. Behaves as a negative element in circadian transcriptional loop. Does not appear to bind DNA, suggesting indirect transcriptional inhibition. This chain is Period circadian protein (per), found in Drosophila simulans (Fruit fly).